Here is a 336-residue protein sequence, read N- to C-terminus: Fructose-1,6-bisphosphatase class 1 (336 aa).

Residues E92, D115, L117, and D118 each contribute to the Mg(2+) site. Substrate contacts are provided by residues 118–121 (DGSS), N211, Y244, 262–264 (YLY), and K274. E280 is a Mg(2+) binding site.

The protein belongs to the FBPase class 1 family. Homotetramer. It depends on Mg(2+) as a cofactor.

It localises to the cytoplasm. It carries out the reaction beta-D-fructose 1,6-bisphosphate + H2O = beta-D-fructose 6-phosphate + phosphate. It functions in the pathway carbohydrate biosynthesis; gluconeogenesis. The protein is Fructose-1,6-bisphosphatase class 1 of Hahella chejuensis (strain KCTC 2396).